A 308-amino-acid chain; its full sequence is Glucan 1,3-beta-glucosidase (308 aa).

A signal peptide spans 1–18 (MQIKFLTTLATVLTSVAA). The active-site Proton donor is E119. N197 carries an N-linked (GlcNAc...) asparagine glycan. The active-site Nucleophile is the E228.

It belongs to the glycosyl hydrolase 17 family.

It localises to the secreted. It is found in the cell wall. It carries out the reaction Successive hydrolysis of beta-D-glucose units from the non-reducing ends of (1-&gt;3)-beta-D-glucans, releasing alpha-glucose.. The sequence is that of Glucan 1,3-beta-glucosidase (BGL2) from Candida albicans (Yeast).